The primary structure comprises 1411 residues: DNA-directed RNA polymerase subunit beta' (1411 aa).

Residues cysteine 69, cysteine 71, cysteine 84, and cysteine 87 each contribute to the Zn(2+) site. Positions 461, 463, and 465 each coordinate Mg(2+). Zn(2+) contacts are provided by cysteine 809, cysteine 883, cysteine 890, and cysteine 893.

The protein belongs to the RNA polymerase beta' chain family. The RNAP catalytic core consists of 2 alpha, 1 beta, 1 beta' and 1 omega subunit. When a sigma factor is associated with the core the holoenzyme is formed, which can initiate transcription. Requires Mg(2+) as cofactor. Zn(2+) serves as cofactor.

The catalysed reaction is RNA(n) + a ribonucleoside 5'-triphosphate = RNA(n+1) + diphosphate. DNA-dependent RNA polymerase catalyzes the transcription of DNA into RNA using the four ribonucleoside triphosphates as substrates. This Ehrlichia ruminantium (strain Welgevonden) protein is DNA-directed RNA polymerase subunit beta'.